The primary structure comprises 140 residues: Small ribosomal subunit protein uS12 (140 aa).

Proline 59 is subject to Hydroxyproline.

The protein belongs to the universal ribosomal protein uS12 family.

The sequence is that of Small ribosomal subunit protein uS12 (RPS23) from Encephalitozoon cuniculi (strain GB-M1) (Microsporidian parasite).